Consider the following 473-residue polypeptide: Photosystem II CP43 reaction center protein (473 aa).

Positions 1-14 (MKILYSLRRFYHVE) are excised as a propeptide. Thr-15 is subject to N-acetylthreonine. A Phosphothreonine modification is found at Thr-15. 5 helical membrane-spanning segments follow: residues 69–93 (LFEV…PHLA), 134–155 (LLGP…QDRN), 178–200 (KALY…RKIT), 255–275 (KPFA…LSYS), and 291–312 (WFNN…ASQA). [CaMn4O5] cluster is bound at residue Glu-367. Residues 447 to 471 (RARAAAAGFEKGIDRDLEPVVYMTP) traverse the membrane as a helical segment.

It belongs to the PsbB/PsbC family. PsbC subfamily. As to quaternary structure, PSII is composed of 1 copy each of membrane proteins PsbA, PsbB, PsbC, PsbD, PsbE, PsbF, PsbH, PsbI, PsbJ, PsbK, PsbL, PsbM, PsbT, PsbX, PsbY, PsbZ, Psb30/Ycf12, at least 3 peripheral proteins of the oxygen-evolving complex and a large number of cofactors. It forms dimeric complexes. Binds multiple chlorophylls and provides some of the ligands for the Ca-4Mn-5O cluster of the oxygen-evolving complex. It may also provide a ligand for a Cl- that is required for oxygen evolution. PSII binds additional chlorophylls, carotenoids and specific lipids. serves as cofactor. Post-translationally, phosphorylated in both bundle sheath and mesophyll cells, phosphorylation increases when cells are grown under high rather than low light regimes (70 vs 900 umol photons/m-2/s).

The protein localises to the plastid. Its subcellular location is the chloroplast thylakoid membrane. Its function is as follows. One of the components of the core complex of photosystem II (PSII). It binds chlorophyll and helps catalyze the primary light-induced photochemical processes of PSII. PSII is a light-driven water:plastoquinone oxidoreductase, using light energy to abstract electrons from H(2)O, generating O(2) and a proton gradient subsequently used for ATP formation. In Zea mays (Maize), this protein is Photosystem II CP43 reaction center protein.